The following is a 311-amino-acid chain: Eukaryotic translation initiation factor 3 subunit E (311 aa).

A PCI domain is found at 100 to 280 (VYYNYPKGRD…MGVKSVSIHE (181 aa)).

This sequence belongs to the eIF-3 subunit E family. In terms of assembly, component of the eukaryotic translation initiation factor 3 (eIF-3) complex.

The protein localises to the cytoplasm. In terms of biological role, component of the eukaryotic translation initiation factor 3 (eIF-3) complex, which is involved in protein synthesis of a specialized repertoire of mRNAs and, together with other initiation factors, stimulates binding of mRNA and methionyl-tRNAi to the 40S ribosome. The eIF-3 complex specifically targets and initiates translation of a subset of mRNAs involved in cell proliferation. The protein is Eukaryotic translation initiation factor 3 subunit E of Caenorhabditis briggsae.